A 377-amino-acid chain; its full sequence is Lactosylceramide 1,3-N-acetyl-beta-D-glucosaminyltransferase (377 aa).

The Cytoplasmic portion of the chain corresponds to 1–12 (MLISARRLRRCQ). A helical; Signal-anchor for type II membrane protein membrane pass occupies residues 13–30 (FFQLLTSCFVLSLMALLV). The Lumenal segment spans residues 31-377 (QEDNSLINHV…DTYPCSAAWS (347 aa)). Residues Asn56, Asn167, and Asn275 are each glycosylated (N-linked (GlcNAc...) asparagine).

Belongs to the glycosyltransferase 31 family.

Its subcellular location is the golgi apparatus membrane. It catalyses the reaction a beta-D-Gal-(1-&gt;4)-beta-D-Glc-(1&lt;-&gt;1)-Cer(d18:1(4E)) + UDP-N-acetyl-alpha-D-glucosamine = a beta-D-GlcNAc-(1-&gt;3)-beta-D-Gal-(1-&gt;4)-beta-D-Glc-(1&lt;-&gt;1)-Cer(d18:1(4E)) + UDP + H(+). The enzyme catalyses a neolactoside nLc4Cer(d18:1(4E)) + UDP-N-acetyl-alpha-D-glucosamine = a neolactoside IV(3)-beta-GlcNAc-nLc4Cer(d18:1(4E)) + UDP + H(+). The protein operates within protein modification; protein glycosylation. Its function is as follows. Beta-1,3-N-acetylglucosaminyltransferase that plays a key role in the synthesis of lacto- or neolacto-series carbohydrate chains on glycolipids. The sequence is that of Lactosylceramide 1,3-N-acetyl-beta-D-glucosaminyltransferase (b3gnt5) from Xenopus tropicalis (Western clawed frog).